The following is a 212-amino-acid chain: Fibroblast growth factor 8b (212 aa).

The first 27 residues, 1 to 27 (MRLKSSRLGYLFLQFMTLCFYTQMTMQ), serve as a signal peptide directing secretion. Residue Asn139 is glycosylated (N-linked (GlcNAc...) asparagine).

The protein belongs to the heparin-binding growth factors family.

The protein localises to the secreted. May act as signaling molecule during development of the midbrain-hindbrain boundary (MHB) organizer, and be involved in patterning of the nervous system. This is Fibroblast growth factor 8b (fgf8b) from Danio rerio (Zebrafish).